A 265-amino-acid polypeptide reads, in one-letter code: Cytochrome c oxidase subunit 3 (265 aa).

7 helical membrane-spanning segments follow: residues 16–36, 41–61, 84–104, 137–157, 162–182, 200–220, and 245–265; these read PWPI…VMYM, GGAT…FVWW, YGSI…FWAS, TPIL…ILAG, AVYA…FQGM, FYLA…FSII, and WHFV…WGGI.

It belongs to the cytochrome c oxidase subunit 3 family. As to quaternary structure, component of the cytochrome c oxidase (complex IV, CIV), a multisubunit enzyme composed of a catalytic core of 3 subunits and several supernumerary subunits. The complex exists as a monomer or a dimer and forms supercomplexes (SCs) in the inner mitochondrial membrane with ubiquinol-cytochrome c oxidoreductase (cytochrome b-c1 complex, complex III, CIII).

Its subcellular location is the mitochondrion inner membrane. It carries out the reaction 4 Fe(II)-[cytochrome c] + O2 + 8 H(+)(in) = 4 Fe(III)-[cytochrome c] + 2 H2O + 4 H(+)(out). Component of the cytochrome c oxidase, the last enzyme in the mitochondrial electron transport chain which drives oxidative phosphorylation. The respiratory chain contains 3 multisubunit complexes succinate dehydrogenase (complex II, CII), ubiquinol-cytochrome c oxidoreductase (cytochrome b-c1 complex, complex III, CIII) and cytochrome c oxidase (complex IV, CIV), that cooperate to transfer electrons derived from NADH and succinate to molecular oxygen, creating an electrochemical gradient over the inner membrane that drives transmembrane transport and the ATP synthase. Cytochrome c oxidase is the component of the respiratory chain that catalyzes the reduction of oxygen to water. Electrons originating from reduced cytochrome c in the intermembrane space (IMS) are transferred via the dinuclear copper A center (CU(A)) of subunit 2 and heme A of subunit 1 to the active site in subunit 1, a binuclear center (BNC) formed by heme A3 and copper B (CU(B)). The BNC reduces molecular oxygen to 2 water molecules using 4 electrons from cytochrome c in the IMS and 4 protons from the mitochondrial matrix. The sequence is that of Cytochrome c oxidase subunit 3 (COX3) from Oenothera berteroana (Bertero's evening primrose).